The sequence spans 290 residues: 4-hydroxybenzoate octaprenyltransferase (290 aa).

8 consecutive transmembrane segments (helical) span residues 23 to 43 (IGTLLLLWPTLWALWLAGKGV), 46 to 66 (LSILVVFVVGVFLMRAAGCVV), 99 to 119 (LFVVLVLVSFGLVLTLNAMTI), 141 to 161 (LPQFVLGAAFGWGIPMAYAAV), 170 to 190 (WLLLLANICWTVAYDTLYAMV), 213 to 233 (LIVGLLQFATLLLMLWVGYLT), 234 to 254 (QMSGAFYWSLLLAGALFIHQQ), and 268 to 288 (AFMDNNYVGLVLFIGIALSYW).

The protein belongs to the UbiA prenyltransferase family. It depends on Mg(2+) as a cofactor.

It localises to the cell inner membrane. The enzyme catalyses all-trans-octaprenyl diphosphate + 4-hydroxybenzoate = 4-hydroxy-3-(all-trans-octaprenyl)benzoate + diphosphate. It functions in the pathway cofactor biosynthesis; ubiquinone biosynthesis. Catalyzes the prenylation of para-hydroxybenzoate (PHB) with an all-trans polyprenyl group. Mediates the second step in the final reaction sequence of ubiquinone-8 (UQ-8) biosynthesis, which is the condensation of the polyisoprenoid side chain with PHB, generating the first membrane-bound Q intermediate 3-octaprenyl-4-hydroxybenzoate. The sequence is that of 4-hydroxybenzoate octaprenyltransferase from Serratia proteamaculans (strain 568).